The following is a 212-amino-acid chain: Fe/S biogenesis protein NfuA (212 aa).

Residues C169 and C172 each coordinate [4Fe-4S] cluster.

The protein belongs to the NfuA family. As to quaternary structure, homodimer. Requires [4Fe-4S] cluster as cofactor.

Functionally, involved in iron-sulfur cluster biogenesis. Binds a 4Fe-4S cluster, can transfer this cluster to apoproteins, and thereby intervenes in the maturation of Fe/S proteins. Could also act as a scaffold/chaperone for damaged Fe/S proteins. The polypeptide is Fe/S biogenesis protein NfuA (Acinetobacter baumannii (strain SDF)).